The primary structure comprises 380 residues: Gibberellin 20 oxidase 3 (380 aa).

One can recognise a Fe2OG dioxygenase domain in the interval 221–321; the sequence is DSDSIFRLNY…RKTFAFFLCP (101 aa). Residues histidine 246, aspartate 248, and histidine 302 each coordinate Fe cation. The active site involves arginine 312.

The protein belongs to the iron/ascorbate-dependent oxidoreductase family. GA20OX subfamily. The cofactor is Fe(2+). Requires L-ascorbate as cofactor. In terms of tissue distribution, expressed at high level in developing siliques. Detected in seeds, roots, leaves and inflorescences. In seeds, specifically detected at the outer layer of the outer integument.

It carries out the reaction gibberellin A12 + 2 2-oxoglutarate + 3 O2 + H(+) = gibberellin A9 + 2 succinate + 3 CO2 + 2 H2O. The enzyme catalyses gibberellin A12 + 3 2-oxoglutarate + 3 O2 = gibberellin A25 + 3 succinate + 3 CO2 + H2O + H(+). The catalysed reaction is gibberellin A53 + 2 2-oxoglutarate + 3 O2 + H(+) = gibberellin A20 + 2 succinate + 3 CO2 + 2 H2O. The protein operates within plant hormone biosynthesis; gibberellin biosynthesis. Functionally, key oxidase enzyme in the biosynthesis of gibberellin that catalyzes the conversion of GA12 and GA53 to GA9 and GA20 respectively, via a three-step oxidation at C-20 of the GA skeleton, and GA25 is also formed as a minor product. GA53 is less effectively oxidized than GA12. In Arabidopsis thaliana (Mouse-ear cress), this protein is Gibberellin 20 oxidase 3 (GA20OX3).